Reading from the N-terminus, the 310-residue chain is Carbamate kinase 1 (310 aa).

Belongs to the carbamate kinase family.

It localises to the cytoplasm. It catalyses the reaction hydrogencarbonate + NH4(+) + ATP = carbamoyl phosphate + ADP + H2O + H(+). The protein operates within metabolic intermediate metabolism; carbamoyl phosphate degradation; CO(2) and NH(3) from carbamoyl phosphate: step 1/1. In Staphylococcus aureus (strain bovine RF122 / ET3-1), this protein is Carbamate kinase 1 (arcC1).